The primary structure comprises 446 residues: Maltoporin (446 aa).

Residues 1–25 form the signal peptide; it reads MMITLRKLPLAVAVAAGVMSAQAMA.

This sequence belongs to the porin LamB (TC 1.B.3) family. In terms of assembly, homotrimer formed of three 18-stranded antiparallel beta-barrels, containing three independent channels.

It is found in the cell outer membrane. The enzyme catalyses beta-maltose(in) = beta-maltose(out). Its function is as follows. Involved in the transport of maltose and maltodextrins. The sequence is that of Maltoporin from Escherichia coli O6:K15:H31 (strain 536 / UPEC).